The primary structure comprises 1007 residues: Mediator of RNA polymerase II transcription subunit 5 (1007 aa).

Belongs to the Mediator complex subunit 5 family. As to quaternary structure, component of the Mediator complex.

It localises to the nucleus. Functionally, component of the Mediator complex, a coactivator involved in the regulated transcription of nearly all RNA polymerase II-dependent genes. Mediator functions as a bridge to convey information from gene-specific regulatory proteins to the basal RNA polymerase II transcription machinery. Mediator is recruited to promoters by direct interactions with regulatory proteins and serves as a scaffold for the assembly of a functional preinitiation complex with RNA polymerase II and the general transcription factors. The sequence is that of Mediator of RNA polymerase II transcription subunit 5 (nut1) from Aspergillus fumigatus (strain ATCC MYA-4609 / CBS 101355 / FGSC A1100 / Af293) (Neosartorya fumigata).